The sequence spans 92 residues: Large ribosomal subunit protein eL31 (92 aa).

The protein belongs to the eukaryotic ribosomal protein eL31 family.

In Desulfurococcus amylolyticus (strain DSM 18924 / JCM 16383 / VKM B-2413 / 1221n) (Desulfurococcus kamchatkensis), this protein is Large ribosomal subunit protein eL31.